A 462-amino-acid polypeptide reads, in one-letter code: Solute carrier family 41 member 3 (462 aa).

9 consecutive transmembrane segments (helical) span residues 41–61, 121–141, 163–183, 194–214, 225–245, 258–278, 351–371, 380–400, and 424–444; these read CQVA…GLVM, LAVV…ASLM, VITA…IVIG, IATP…LALM, WYLT…WIFI, YGWF…LILS, VLLF…CLVE, IFVL…LYLA, and GLGD…DWLL.

It belongs to the SLC41A transporter family.

The protein localises to the mitochondrion inner membrane. It carries out the reaction Mg(2+)(in) + 2 Na(+)(out) = Mg(2+)(out) + 2 Na(+)(in). Na(+)/Mg(2+) ion exchanger that acts as a predominant Mg(2+) efflux system at the mitochondrial inner membrane. This is Solute carrier family 41 member 3 (Slc41a3) from Rattus norvegicus (Rat).